Here is a 236-residue protein sequence, read N- to C-terminus: Small ribosomal subunit protein uS2c (236 aa).

The protein belongs to the universal ribosomal protein uS2 family.

It is found in the plastid. Its subcellular location is the chloroplast. The chain is Small ribosomal subunit protein uS2c (rps2) from Chaetosphaeridium globosum (Charophycean green alga).